A 262-amino-acid chain; its full sequence is Tritrans,polycis-undecaprenyl-diphosphate synthase (GGDP specific) (262 aa).

D40 is an active-site residue. Residue D40 coordinates Mg(2+). Substrate is bound by residues 41-44 (GNRR), W45, and 85-87 (SAE). The active-site Proton acceptor is the N88. Residues R92, R211, and 217 to 219 (RIS) contribute to the substrate site. A Mg(2+)-binding site is contributed by E230.

It belongs to the UPP synthase family. As to quaternary structure, homodimer. Mg(2+) serves as cofactor.

It catalyses the reaction geranylgeranyl diphosphate + 7 isopentenyl diphosphate = tri-trans,hepta-cis-undecaprenyl diphosphate + 7 diphosphate. In terms of biological role, generates tritrans,heptacis-undecaprenyl diphosphate from isopentenyl pyrophosphate (IPP) and geranylgeranyl diphosphate. It is probably the precursor of glycosyl carrier lipids. This is Tritrans,polycis-undecaprenyl-diphosphate synthase (GGDP specific) (uppS) from Sulfolobus acidocaldarius (strain ATCC 33909 / DSM 639 / JCM 8929 / NBRC 15157 / NCIMB 11770).